The following is a 32-amino-acid chain: Peptide tarsal-less AA (32 aa).

A disordered region spans residues 1–32; sequence MLDPTGTYRRPRDTQDSRQKRRQDCLDPTGQY. Repeat unit 1 spans residues 2-8; it reads LDPTGTY. Residues 2–32 form a 2 X 7 AA repeats of L-D-P-T-G-[TQ]-Y region; that stretch reads LDPTGTYRRPRDTQDSRQKRRQDCLDPTGQY. Positions 10 to 25 are enriched in basic and acidic residues; that stretch reads RPRDTQDSRQKRRQDC. Copy 2 of the repeat occupies 26-32; it reads LDPTGQY.

Its subcellular location is the cytoplasm. It localises to the nucleus. One of four peptides (tal-1A, tal-2A, tal-3A and tal-AA) produced from a polycistronic gene that function redundantly in several developmental processes. Required in early stages of leg development for the intercalation of the tarsal segments during the mid-third instar stage and later for tarsal joint formation. Promotes the post-translational modification of ovo isoform B (svb) into its active form which in turn initiates trichome development and promotes tarsal joint development. This is likely due to recruitment of the E3 ubiquitin-protein ligase Ubr3 to svb for ubiquitination of its N-terminus, converting svb into a transcriptional activator. Also enhances interaction of Ubr3 with Diap1. Required for correct wing and leg formation through its regulation of several genes including those in the Notch signaling pathway. Essential for denticle formation and may have a role in the developmental timing of trichome differentiation. Essential for the development of taenidial folds in the trachea. The sequence is that of Peptide tarsal-less AA from Drosophila melanogaster (Fruit fly).